Consider the following 408-residue polypeptide: LL-diaminopimelate aminotransferase (408 aa).

Residues Y15 and G42 each coordinate substrate. Residues Y72, 108 to 109, Y132, N187, Y218, and 246 to 248 contribute to the pyridoxal 5'-phosphate site; these read SK and SFS. 3 residues coordinate substrate: K109, Y132, and N187. K249 carries the N6-(pyridoxal phosphate)lysine modification. Pyridoxal 5'-phosphate-binding residues include R257 and N292. Substrate-binding residues include N292 and R388.

Belongs to the class-I pyridoxal-phosphate-dependent aminotransferase family. LL-diaminopimelate aminotransferase subfamily. In terms of assembly, homodimer. It depends on pyridoxal 5'-phosphate as a cofactor.

It catalyses the reaction (2S,6S)-2,6-diaminopimelate + 2-oxoglutarate = (S)-2,3,4,5-tetrahydrodipicolinate + L-glutamate + H2O + H(+). Its pathway is amino-acid biosynthesis; L-lysine biosynthesis via DAP pathway; LL-2,6-diaminopimelate from (S)-tetrahydrodipicolinate (aminotransferase route): step 1/1. Functionally, involved in the synthesis of meso-diaminopimelate (m-DAP or DL-DAP), required for both lysine and peptidoglycan biosynthesis. Catalyzes the direct conversion of tetrahydrodipicolinate to LL-diaminopimelate. The chain is LL-diaminopimelate aminotransferase from Parasynechococcus marenigrum (strain WH8102).